Reading from the N-terminus, the 445-residue chain is Putative serpin-Z5 (445 aa).

Residues 356–380 form an RCL region; that stretch reads GTEAAASAINMVCGMSMTPEPRPVP.

The protein belongs to the serpin family.

Its function is as follows. Probable serine protease inhibitor. This Oryza sativa subsp. japonica (Rice) protein is Putative serpin-Z5.